The chain runs to 134 residues: Methylglyoxal synthase (134 aa).

Residues 1–134 (MHIALIAHDE…DWRDLRRNDE (134 aa)) form the MGS-like domain. Substrate-binding positions include His-8, Lys-12, 34 to 37 (TGTT), and 54 to 55 (SG). The Proton donor/acceptor role is filled by Asp-60. His-87 serves as a coordination point for substrate.

This sequence belongs to the methylglyoxal synthase family.

It carries out the reaction dihydroxyacetone phosphate = methylglyoxal + phosphate. Its function is as follows. Catalyzes the formation of methylglyoxal from dihydroxyacetone phosphate. The sequence is that of Methylglyoxal synthase from Listeria welshimeri serovar 6b (strain ATCC 35897 / DSM 20650 / CCUG 15529 / CIP 8149 / NCTC 11857 / SLCC 5334 / V8).